Here is a 163-residue protein sequence, read N- to C-terminus: NADH-quinone oxidoreductase subunit I (163 aa).

4Fe-4S ferredoxin-type domains are found at residues 53-83 (LRRYPNGEERCIACKLCEAICPAQAITIEAG) and 94-123 (VRYDIDMVKCIYCGFCQEACPVEAIVEGPN). C63, C66, C69, C73, C103, C106, C109, and C113 together coordinate [4Fe-4S] cluster.

This sequence belongs to the complex I 23 kDa subunit family. As to quaternary structure, NDH-1 is composed of 14 different subunits. Subunits NuoA, H, J, K, L, M, N constitute the membrane sector of the complex. Requires [4Fe-4S] cluster as cofactor.

It localises to the cell inner membrane. The enzyme catalyses a quinone + NADH + 5 H(+)(in) = a quinol + NAD(+) + 4 H(+)(out). NDH-1 shuttles electrons from NADH, via FMN and iron-sulfur (Fe-S) centers, to quinones in the respiratory chain. The immediate electron acceptor for the enzyme in this species is believed to be ubiquinone. Couples the redox reaction to proton translocation (for every two electrons transferred, four hydrogen ions are translocated across the cytoplasmic membrane), and thus conserves the redox energy in a proton gradient. In Bartonella henselae (strain ATCC 49882 / DSM 28221 / CCUG 30454 / Houston 1) (Rochalimaea henselae), this protein is NADH-quinone oxidoreductase subunit I.